The primary structure comprises 142 residues: Phosphoribosyl-AMP cyclohydrolase (142 aa).

A Mg(2+)-binding site is contributed by aspartate 92. Cysteine 93 provides a ligand contact to Zn(2+). Mg(2+) is bound by residues aspartate 94 and aspartate 96. Zn(2+) contacts are provided by cysteine 109 and cysteine 116.

It belongs to the PRA-CH family. In terms of assembly, homodimer. Mg(2+) is required as a cofactor. Requires Zn(2+) as cofactor.

The protein resides in the cytoplasm. It carries out the reaction 1-(5-phospho-beta-D-ribosyl)-5'-AMP + H2O = 1-(5-phospho-beta-D-ribosyl)-5-[(5-phospho-beta-D-ribosylamino)methylideneamino]imidazole-4-carboxamide. Its pathway is amino-acid biosynthesis; L-histidine biosynthesis; L-histidine from 5-phospho-alpha-D-ribose 1-diphosphate: step 3/9. Its function is as follows. Catalyzes the hydrolysis of the adenine ring of phosphoribosyl-AMP. This Alkalilimnicola ehrlichii (strain ATCC BAA-1101 / DSM 17681 / MLHE-1) protein is Phosphoribosyl-AMP cyclohydrolase.